Here is a 199-residue protein sequence, read N- to C-terminus: Prolactin-1 (199 aa).

3 disulfide bridges follow: C4–C11, C58–C174, and C191–C199. N-linked (GlcNAc...) asparagine glycosylation is present at N60.

It belongs to the somatotropin/prolactin family. Glycosylated.

It is found in the secreted. This is Prolactin-1 from Alligator mississippiensis (American alligator).